Reading from the N-terminus, the 92-residue chain is DNA-directed RNA polymerase subunit omega (92 aa).

It belongs to the RNA polymerase subunit omega family. As to quaternary structure, the RNAP catalytic core consists of 2 alpha, 1 beta, 1 beta' and 1 omega subunit. When a sigma factor is associated with the core the holoenzyme is formed, which can initiate transcription.

It catalyses the reaction RNA(n) + a ribonucleoside 5'-triphosphate = RNA(n+1) + diphosphate. In terms of biological role, promotes RNA polymerase assembly. Latches the N- and C-terminal regions of the beta' subunit thereby facilitating its interaction with the beta and alpha subunits. This chain is DNA-directed RNA polymerase subunit omega, found in Shewanella frigidimarina (strain NCIMB 400).